Consider the following 204-residue polypeptide: Pyridoxal 5'-phosphate synthase subunit PdxT (204 aa).

Position 52–54 (52–54 (GES)) interacts with L-glutamine. The Nucleophile role is filled by C84. L-glutamine-binding positions include R116 and 143–144 (IR). Active-site charge relay system residues include H184 and E186.

It belongs to the glutaminase PdxT/SNO family. As to quaternary structure, in the presence of PdxS, forms a dodecamer of heterodimers. Only shows activity in the heterodimer.

It carries out the reaction aldehydo-D-ribose 5-phosphate + D-glyceraldehyde 3-phosphate + L-glutamine = pyridoxal 5'-phosphate + L-glutamate + phosphate + 3 H2O + H(+). It catalyses the reaction L-glutamine + H2O = L-glutamate + NH4(+). It functions in the pathway cofactor biosynthesis; pyridoxal 5'-phosphate biosynthesis. Functionally, catalyzes the hydrolysis of glutamine to glutamate and ammonia as part of the biosynthesis of pyridoxal 5'-phosphate. The resulting ammonia molecule is channeled to the active site of PdxS. This is Pyridoxal 5'-phosphate synthase subunit PdxT from Pyrobaculum arsenaticum (strain DSM 13514 / JCM 11321 / PZ6).